Consider the following 362-residue polypeptide: N-alpha-acetyltransferase 30 (362 aa).

Residues 1–20 show a composition bias toward pro residues; it reads MAEVPPGPSSLLPPPAPPAP. 3 disordered regions span residues 1–26, 38–88, and 113–182; these read MAEV…VEPR, CSED…NGLI, and ATTA…EEDE. Residues serine 39 and serine 55 each carry the phosphoserine modification. Positions 39–48 are enriched in acidic residues; the sequence is SEDEEDDEEH. Phosphothreonine is present on threonine 117. Positions 149-165 are enriched in low complexity; that stretch reads AVPSPVEAAAASDPAAA. The residue at position 152 (serine 152) is a Phosphoserine. Over residues 173-182 the composition is skewed to acidic residues; the sequence is TEQEEEEEDE. 3 positions are modified to phosphoserine: serine 190, serine 196, and serine 199. Positions 214-362 constitute an N-acetyltransferase domain; that stretch reads RYVRYESELQ…DALRLKLWLR (149 aa). The residue at position 233 (lysine 233) is an N6-acetyllysine.

Belongs to the acetyltransferase family. MAK3 subfamily. In terms of assembly, component of the N-terminal acetyltransferase C (NatC) complex, which is composed of NAA35, NAA38 and NAA30.

Its subcellular location is the cytoplasm. The protein localises to the nucleus. The enzyme catalyses N-terminal L-methionyl-L-leucyl-[protein] + acetyl-CoA = N-terminal N(alpha)-acetyl-L-methionyl-L-leucyl-[protein] + CoA + H(+). It catalyses the reaction N-terminal L-methionyl-L-isoleucyl-[protein] + acetyl-CoA = N-terminal N(alpha)-acetyl-L-methionyl-L-isoleucyl-[protein] + CoA + H(+). The catalysed reaction is N-terminal L-methionyl-L-phenylalanyl-[protein] + acetyl-CoA = N-terminal N(alpha)-acetyl-L-methionyl-L-phenylalanyl-[protein] + CoA + H(+). It carries out the reaction N-terminal L-methionyl-L-tryptophyl-[protein] + acetyl-CoA = N-terminal N(alpha)-acetyl-L-methionyl-L-tryptophyl-[protein] + CoA + H(+). The enzyme catalyses N-terminal L-methionyl-L-tyrosyl-[protein] + acetyl-CoA = N-terminal N(alpha)-acetyl-L-methionyl-L-tyrosyl-[protein] + CoA + H(+). In terms of biological role, catalytic subunit of the N-terminal acetyltransferase C (NatC) complex. Catalyzes acetylation of the N-terminal methionine residues of peptides beginning with Met-Leu-Ala and Met-Leu-Gly. N-terminal acetylation protects proteins from ubiquitination and degradation by the N-end rule pathway. Necessary for the lysosomal localization and function of ARL8B sugeesting that ARL8B is a NatC substrate. The polypeptide is N-alpha-acetyltransferase 30 (NAA30) (Homo sapiens (Human)).